Here is a 268-residue protein sequence, read N- to C-terminus: Phosphatidylglycerol--prolipoprotein diacylglyceryl transferase (268 aa).

Helical transmembrane passes span 25 to 45 (WYGVFFALSFLCGLYLMTKVF), 57 to 77 (YLFYYMIAGTVIGARLGHCFF), and 93 to 113 (VWHGGLASHGGVLGILTAVYF). Arginine 142 contributes to the a 1,2-diacyl-sn-glycero-3-phospho-(1'-sn-glycerol) binding site. Transmembrane regions (helical) follow at residues 151-171 (IIGIPTDVSWAFIFARVDLLP), 175-195 (VQLYESIVYFLIFGFLMLAYW), 204-224 (GLLLGTILTSVFSARFLLEFF), and 236-256 (PLSVGQWLSIPAVIIGVLLIF).

Belongs to the Lgt family.

It is found in the cell inner membrane. The enzyme catalyses L-cysteinyl-[prolipoprotein] + a 1,2-diacyl-sn-glycero-3-phospho-(1'-sn-glycerol) = an S-1,2-diacyl-sn-glyceryl-L-cysteinyl-[prolipoprotein] + sn-glycerol 1-phosphate + H(+). It participates in protein modification; lipoprotein biosynthesis (diacylglyceryl transfer). In terms of biological role, catalyzes the transfer of the diacylglyceryl group from phosphatidylglycerol to the sulfhydryl group of the N-terminal cysteine of a prolipoprotein, the first step in the formation of mature lipoproteins. The sequence is that of Phosphatidylglycerol--prolipoprotein diacylglyceryl transferase from Chloroherpeton thalassium (strain ATCC 35110 / GB-78).